The chain runs to 329 residues: NADH-quinone oxidoreductase subunit H (329 aa).

Transmembrane regions (helical) follow at residues 9–29, 42–62, 75–95, 117–137, 154–174, 188–208, 238–258, 260–280, and 309–329; these read LIKI…ATYI, GPCY…IKLF, FIFT…MAPI, IGFL…ILAG, IQLL…LMVV, GGFL…FLIA, LKWG…SFVI, IVFF…AILI, and WKIM…IILI.

The protein belongs to the complex I subunit 1 family. In terms of assembly, NDH-1 is composed of 14 different subunits. Subunits NuoA, H, J, K, L, M, N constitute the membrane sector of the complex.

The protein localises to the cell inner membrane. The enzyme catalyses a quinone + NADH + 5 H(+)(in) = a quinol + NAD(+) + 4 H(+)(out). Its function is as follows. NDH-1 shuttles electrons from NADH, via FMN and iron-sulfur (Fe-S) centers, to quinones in the respiratory chain. The immediate electron acceptor for the enzyme in this species is believed to be ubiquinone. Couples the redox reaction to proton translocation (for every two electrons transferred, four hydrogen ions are translocated across the cytoplasmic membrane), and thus conserves the redox energy in a proton gradient. This subunit may bind ubiquinone. This is NADH-quinone oxidoreductase subunit H from Helicobacter pylori (strain G27).